The primary structure comprises 438 residues: Ammonium transporter Rh type A (438 aa).

Topologically, residues 1–4 (MRFK) are cytoplasmic. Residues 5–25 (FPLMAISLEVAMIVLFGLFVE) traverse the membrane as a helical segment. Residues 26 to 61 (YETPQNASQKNASHQNASQQGNTSSSAKKDQFFQLY) are Extracellular-facing. N-linked (GlcNAc...) asparagine glycosylation is found at N31, N36, N41, and N47. Residues 62–82 (PLFQDVHVMIFVGFGFLMTFL) traverse the membrane as a helical segment. At 83–86 (KKYG) the chain is on the cytoplasmic side. The chain crosses the membrane as a helical span at residues 87-107 (FSGVGFNLFLAALGLQWGTIM). The Extracellular segment spans residues 108–121 (QGLLHSHGKEFHFG). Residues 122–142 (IYNMINADFSTATVLISFGAV) form a helical membrane-spanning segment. Residues 143-148 (LGKTSP) are Cytoplasmic-facing. A helical membrane pass occupies residues 149-169 (IQMLIMTILEIAVFAGNEYLV). The Extracellular portion of the chain corresponds to 170–178 (TELFEASDT). The chain crosses the membrane as a helical span at residues 179-199 (GASMTIHAFGAYFGLAVAGVL). Topologically, residues 200–218 (YRPGLRCEHPNDESVYHSD) are cytoplasmic. Residues 219-239 (LFAMIGTLFLWIFWPSFNSAI) traverse the membrane as a helical segment. Residues 240–249 (ADPGDHQYRA) are Extracellular-facing. Residues 250 to 270 (IVNTYMSLAACVITAYALSSL) traverse the membrane as a helical segment. The Cytoplasmic segment spans residues 271–278 (VERRGRLD). A helical membrane pass occupies residues 279 to 296 (MVHIQNATLAGGVAVGTC). At 297-300 (ADME) the chain is on the extracellular side. Residues 301 to 321 (IPLYAAMTIGSIAGIISVLGY) traverse the membrane as a helical segment. At 322–342 (KFFSPLLANKLMIHDTCGVHN) the chain is on the cytoplasmic side. A helical transmembrane segment spans residues 343 to 363 (LHGLPGVFGGLASIVAISWGM). Residues 364–372 (STASMAMQA) lie on the Extracellular side of the membrane. Residues 373-393 (AALGSSIGSAIVGGLLTGLIL) form a helical membrane-spanning segment. Over 394 to 438 (KLPIWNQPPDEYCYDDSVSWKVPKFRELDNRFFQHANHNHVEHEV) the chain is Cytoplasmic.

Belongs to the ammonium transporter (TC 2.A.49) family. Rh subfamily. As to quaternary structure, homodimer. Heterotrimer; a RHCE monomer interacts with a RHAG homodimer. Component of the ankyrin-1 complex in the erythrocyte, composed of ANK1, RHCE, RHAG, SLC4A1, EPB42, GYPA, GYPB and AQP1. Interacts with GYPB (via the N-terminal); this interaction bridges the (RHAG)2(RHCE) heterotrimer with the SLC4A1 Band 3 I dimer complexed with GYPA. Glycosylated.

The protein localises to the membrane. It carries out the reaction methylamine(out) = methylamine(in). The enzyme catalyses NH4(+)(in) = NH4(+)(out). It catalyses the reaction CO2(out) = CO2(in). Its function is as follows. Component of the ankyrin-1 complex, a multiprotein complex involved in the stability and shape of the erythrocyte membrane. Heterotrimer with RHCE (RHAG)2(RHCE), that transports ammonium and its related derivative methylammonium, in both neutral and ionic forms, across the erythrocyte membrane. The transport of NH4(+) is electrogenic and masks the NH3 transport. Also, may act as a CO2 channel. Moreover in erythrocyte, regulates RHD membrane expression and is associated with rhesus blood group antigen expression. This chain is Ammonium transporter Rh type A, found in Mus musculus (Mouse).